The following is a 573-amino-acid chain: 60 kDa heat shock protein, mitochondrial (573 aa).

The N-terminal 26 residues, 1-26 (MLRLPTVLRQMRPVSRALAPHLTRAY), are a transit peptide targeting the mitochondrion. An N6-succinyllysine modification is found at K31. A phosphoserine mark is found at S67 and S70. K75 is a binding site for ATP. An N6-acetyllysine modification is found at K75. Position 82 is an N6-acetyllysine; alternate (K82). Residue K82 is modified to N6-succinyllysine; alternate. K87 bears the N6-acetyllysine mark. Y90 is subject to Phosphotyrosine. K91 is subject to N6-acetyllysine. 111-115 (DGTTT) lines the ATP pocket. N6-acetyllysine; alternate is present on K125. K125 is subject to N6-succinyllysine; alternate. K130 bears the N6-acetyllysine mark. K133 is modified (N6-acetyllysine; alternate). Position 133 is an N6-succinyllysine; alternate (K133). Residue K133 is modified to N6-malonyllysine; alternate. Position 156 is an N6-acetyllysine (K156). N6-acetyllysine; alternate occurs at positions 191, 202, 205, 218, and 236. K191, K202, K205, K218, and K236 each carry N6-succinyllysine; alternate. K249 bears the N6-acetyllysine mark. N6-acetyllysine; alternate is present on K250. The residue at position 250 (K250) is an N6-succinyllysine; alternate. N6-acetyllysine is present on residues K269 and K292. The residue at position 301 (K301) is an N6-succinyllysine. K314 carries the post-translational modification N6-acetyllysine. At K352 the chain carries N6-acetyllysine; alternate. K352 is subject to N6-succinyllysine; alternate. Residues K359 and K389 each carry the N6-acetyllysine modification. K396 carries the N6-acetyllysine; alternate modification. Position 396 is an N6-succinyllysine; alternate (K396). Residue S410 is modified to Phosphoserine. An ATP-binding site is contributed by G440. The residue at position 455 (K455) is an N6-acetyllysine; alternate. K455 is subject to N6-succinyllysine; alternate. K469 bears the N6-acetyllysine mark. At K481 the chain carries N6-acetyllysine; alternate. N6-succinyllysine; alternate is present on K481. S488 bears the Phosphoserine mark. D520 serves as a coordination point for ATP. A Glycyl lysine isopeptide (Lys-Gly) (interchain with G-Cter in SUMO2) cross-link involves residue K551.

It belongs to the chaperonin (HSP60) family. In terms of assembly, homoheptamer arranged in a ring structure. The functional units of these chaperonins consist of heptameric rings of the large subunit Hsp60, which function as a back-to-back double ring. Interacts with 2 heptameric Hsp10 rings to form the symmetrical football complex. Interacts with HRAS. Interacts with ATAD3A. Interacts with ETFBKMT and EEF1AKMT3. Interacts with MFHAS1.

The protein resides in the mitochondrion matrix. The catalysed reaction is ATP + H2O + a folded polypeptide = ADP + phosphate + an unfolded polypeptide.. In terms of biological role, chaperonin implicated in mitochondrial protein import and macromolecular assembly. Together with Hsp10, facilitates the correct folding of imported proteins. May also prevent misfolding and promote the refolding and proper assembly of unfolded polypeptides generated under stress conditions in the mitochondrial matrix. The functional units of these chaperonins consist of heptameric rings of the large subunit Hsp60, which function as a back-to-back double ring. In a cyclic reaction, Hsp60 ring complexes bind one unfolded substrate protein per ring, followed by the binding of ATP and association with 2 heptameric rings of the co-chaperonin Hsp10. This leads to sequestration of the substrate protein in the inner cavity of Hsp60 where, for a certain period of time, it can fold undisturbed by other cell components. Synchronous hydrolysis of ATP in all Hsp60 subunits results in the dissociation of the chaperonin rings and the release of ADP and the folded substrate protein. The protein is 60 kDa heat shock protein, mitochondrial (HSPD1) of Cricetulus griseus (Chinese hamster).